Consider the following 111-residue polypeptide: Photosystem II reaction center Psb28 protein (111 aa).

This sequence belongs to the Psb28 family. As to quaternary structure, part of the photosystem II complex.

Its subcellular location is the cellular thylakoid membrane. The protein is Photosystem II reaction center Psb28 protein of Acaryochloris marina (strain MBIC 11017).